A 168-amino-acid chain; its full sequence is Small ribosomal subunit protein bS16 (168 aa).

The interval 110-168 (LAEAEGGPSNEATQPKKKKAPAKKAASDIEATADPAGNADKSEPAAEGEDATVAGATEG) is disordered.

The protein belongs to the bacterial ribosomal protein bS16 family.

This Mycobacterium sp. (strain JLS) protein is Small ribosomal subunit protein bS16.